The sequence spans 298 residues: Elongation factor Ts (298 aa).

Positions 80–83 (TDFV) are involved in Mg(2+) ion dislocation from EF-Tu.

The protein belongs to the EF-Ts family.

It is found in the cytoplasm. Associates with the EF-Tu.GDP complex and induces the exchange of GDP to GTP. It remains bound to the aminoacyl-tRNA.EF-Tu.GTP complex up to the GTP hydrolysis stage on the ribosome. The chain is Elongation factor Ts from Acidovorax sp. (strain JS42).